Here is a 163-residue protein sequence, read N- to C-terminus: Putative NOL1/NOP2/Sun domain family member 5B (163 aa).

Cys-93 functions as the Nucleophile in the catalytic mechanism.

It belongs to the class I-like SAM-binding methyltransferase superfamily. RsmB/NOP family. In terms of tissue distribution, ubiquitous.

In Homo sapiens (Human), this protein is Putative NOL1/NOP2/Sun domain family member 5B (NSUN5P1).